A 105-amino-acid chain; its full sequence is Fe-S protein maturation auxiliary factor PG_1777 (105 aa).

Belongs to the Fe-S cluster assembly domain superfamily. MIP18-like family. Putative homodimer; may be disulfide-linked.

In terms of biological role, iron binding protein that protects DNA from Fenton chemistry-mediated damage caused by hydrogen peroxide induced oxidative stress. May be involved in iron-sulfur cluster assembly. The polypeptide is Fe-S protein maturation auxiliary factor PG_1777 (Porphyromonas gingivalis (strain ATCC BAA-308 / W83)).